We begin with the raw amino-acid sequence, 631 residues long: Phosphomethylpyrimidine synthase (631 aa).

Residues asparagine 239, methionine 268, tyrosine 297, histidine 333, 353 to 355 (SRG), 394 to 397 (DGLR), and glutamate 433 contribute to the substrate site. Histidine 437 provides a ligand contact to Zn(2+). Residue tyrosine 460 participates in substrate binding. Residue histidine 501 coordinates Zn(2+). Positions 581, 584, and 589 each coordinate [4Fe-4S] cluster.

This sequence belongs to the ThiC family. In terms of assembly, homodimer. [4Fe-4S] cluster is required as a cofactor.

The enzyme catalyses 5-amino-1-(5-phospho-beta-D-ribosyl)imidazole + S-adenosyl-L-methionine = 4-amino-2-methyl-5-(phosphooxymethyl)pyrimidine + CO + 5'-deoxyadenosine + formate + L-methionine + 3 H(+). It participates in cofactor biosynthesis; thiamine diphosphate biosynthesis. In terms of biological role, catalyzes the synthesis of the hydroxymethylpyrimidine phosphate (HMP-P) moiety of thiamine from aminoimidazole ribotide (AIR) in a radical S-adenosyl-L-methionine (SAM)-dependent reaction. The protein is Phosphomethylpyrimidine synthase of Salmonella typhi.